The primary structure comprises 101 residues: Urease subunit beta (101 aa).

The protein belongs to the urease beta subunit family. In terms of assembly, heterotrimer of UreA (gamma), UreB (beta) and UreC (alpha) subunits. Three heterotrimers associate to form the active enzyme.

The protein localises to the cytoplasm. It catalyses the reaction urea + 2 H2O + H(+) = hydrogencarbonate + 2 NH4(+). It participates in nitrogen metabolism; urea degradation; CO(2) and NH(3) from urea (urease route): step 1/1. In Burkholderia orbicola (strain AU 1054), this protein is Urease subunit beta.